The primary structure comprises 238 residues: Ribosome-recycling factor, mitochondrial (238 aa).

Belongs to the RRF family.

Its subcellular location is the mitochondrion. Responsible for the release of ribosomes from messenger RNA at the termination of protein biosynthesis. May increase the efficiency of translation by recycling ribosomes from one round of translation to another. The sequence is that of Ribosome-recycling factor, mitochondrial from Caenorhabditis elegans.